The following is a 499-amino-acid chain: MEEFKRYLELDRSQQHDFVYPLIFQEYIYALAHDHGLTRSIFLENIGYDNKFSLLIVKHLITQMYQQNHFLFSANDSNQNLFFGHNTNLYSQMILEGFVAVVEIPFSLFSLEGKEIVKSQNLRSIHSIFPFLEDKFSHLNYVLDILIPHSIHLEISVQTLRYWVKDASSLYLLRFFLHMYWNWNSLITPKKSSFDFSKRNQRLFLFLYNFHICEYESIFVFLRKQSSHLRSISSGTFLERRYFYGKIEHFLEVFTKDFQVILWLFKDPFIHYVRYQGKYILASKGTSLLMNKWKSYLVNFWQCYFYMWSQPGRIHINQLSKHSPDFLGYLSSVRLNPSMVRSQMLENSFLIGNAIKKFDTIVPIIPMIGSLSKAKFCNVLGHPISKPVWADLSDSDIIDRFGRIYRNLSHYHSGSSKKTSLYRIKYIXXXXXXXTLARKHKITVRAFLKRLGSELLEEFFTGEEQVFSLTFPSSTSQGLYRRRIWYLDIVCINDLASHE.

It belongs to the intron maturase 2 family. MatK subfamily.

The protein localises to the plastid. Its subcellular location is the chloroplast. Usually encoded in the trnK tRNA gene intron. Probably assists in splicing its own and other chloroplast group II introns. In Camellia sasanqua (Christmas camellia), this protein is Maturase K.